The following is a 698-amino-acid chain: Nitric oxide-associated protein 1 (698 aa).

Residues 42 to 66 (FQHSSSLGRELPYDPVDTEGFGEGG) form a disordered region. A Phosphotyrosine modification is found at Y77. Disordered stretches follow at residues 80-134 (DPEP…DPAL) and 279-306 (LAPGHQGPQRPVKDEPQDGENPNPPNWS). The segment covering 102–126 (ERQRQQRREERRQQNLRARSREHPV) has biased composition (basic and acidic residues). The CP-type G domain occupies 202–503 (LELVSAALRR…FYDTPGITKE (302 aa)).

Belongs to the TRAFAC class YlqF/YawG GTPase family. NOA1 subfamily. In terms of assembly, homodimer or multimer. Interacts with mitochondrial complex I, DAP3, MRPL12 and MRPS27.

It localises to the mitochondrion inner membrane. Functionally, involved in regulation of mitochondrial protein translation and respiration. Plays a role in mitochondria-mediated cell death. May act as a scaffolding protein or stabilizer of respiratory chain supercomplexes. Binds GTP. The polypeptide is Nitric oxide-associated protein 1 (NOA1) (Homo sapiens (Human)).